The following is a 498-amino-acid chain: MGKYVVALDQGTTSSRAIIFDKEQNIVGVSQKEFTQIYPHEGWVEHNPLEIWSSQYGVLQEVLAKTNVTADEISAIGITNQRETTIVWDKNTGEPVYNAIVWQCRRTASIVDELKKDDEFAEYVKANTGLLLDAYFSGTKIKWILDNVEGAREKAEKGDLLFGTVDTWLVWKLTNGKVHVTDYTNASRTMLYNIKELRWDEKIINKLGIPTSMLPEVKNSSEVYGHTNLGGVGGVRVPISGMAGDQQCALFGQTCFEKGSAKNTYGTGCFLLMNTGEDMVLSKNGLVTTIAVGINDKIEYALEGSVFVGGAVIQWVRDELQFIHDAADSEYFAKKVEDNGGVYVVPAFVGLGAPYWDMYARGAIFGLTRGANRNHIIRAALESIAYQTNDLLTAMAEDAGCKLASLRVDGGASRNDLLMQFQADISNTQVLRPIITETTALGAAYLAGLAVGFWESKEEIATKWAISKSYGPTFERAKREKLNKGWKNAVSRVKGWAE.

Thr-12 is an ADP binding site. Positions 12, 13, and 14 each coordinate ATP. Residue Thr-12 coordinates sn-glycerol 3-phosphate. An ADP-binding site is contributed by Arg-16. 4 residues coordinate sn-glycerol 3-phosphate: Arg-82, Glu-83, Tyr-135, and Asp-245. Positions 82, 83, 135, 245, and 246 each coordinate glycerol. Residues Thr-267 and Gly-310 each coordinate ADP. ATP is bound by residues Thr-267, Gly-310, Gln-314, and Gly-411. ADP contacts are provided by Gly-411 and Asn-415.

Belongs to the FGGY kinase family. Homotetramer and homodimer (in equilibrium).

It catalyses the reaction glycerol + ATP = sn-glycerol 3-phosphate + ADP + H(+). The protein operates within polyol metabolism; glycerol degradation via glycerol kinase pathway; sn-glycerol 3-phosphate from glycerol: step 1/1. With respect to regulation, activated by phosphorylation and inhibited by fructose 1,6-bisphosphate (FBP). Its function is as follows. Key enzyme in the regulation of glycerol uptake and metabolism. Catalyzes the phosphorylation of glycerol to yield sn-glycerol 3-phosphate. This is Glycerol kinase from Clostridium botulinum (strain Eklund 17B / Type B).